The sequence spans 101 residues: Large ribosomal subunit protein uL24 (101 aa).

It belongs to the universal ribosomal protein uL24 family. Part of the 50S ribosomal subunit.

In terms of biological role, one of two assembly initiator proteins, it binds directly to the 5'-end of the 23S rRNA, where it nucleates assembly of the 50S subunit. Its function is as follows. One of the proteins that surrounds the polypeptide exit tunnel on the outside of the subunit. The chain is Large ribosomal subunit protein uL24 from Ligilactobacillus salivarius (strain UCC118) (Lactobacillus salivarius).